Here is an 865-residue protein sequence, read N- to C-terminus: Valine--tRNA ligase (865 aa).

The 'HIGH' region motif lies at 43–53 (PNITGRIHMGH). The short motif at 523–527 (KMSKS) is the 'KMSKS' region element. ATP is bound at residue Lys526. Positions 797 to 865 (GLIDFEKEKE…RLESILRDLE (69 aa)) form a coiled coil.

It belongs to the class-I aminoacyl-tRNA synthetase family. ValS type 1 subfamily. As to quaternary structure, monomer.

Its subcellular location is the cytoplasm. The catalysed reaction is tRNA(Val) + L-valine + ATP = L-valyl-tRNA(Val) + AMP + diphosphate. Functionally, catalyzes the attachment of valine to tRNA(Val). As ValRS can inadvertently accommodate and process structurally similar amino acids such as threonine, to avoid such errors, it has a 'posttransfer' editing activity that hydrolyzes mischarged Thr-tRNA(Val) in a tRNA-dependent manner. The sequence is that of Valine--tRNA ligase from Thermotoga maritima (strain ATCC 43589 / DSM 3109 / JCM 10099 / NBRC 100826 / MSB8).